Here is a 403-residue protein sequence, read N- to C-terminus: F-box/LRR-repeat protein At1g06630 (403 aa).

In terms of domain architecture, F-box spans 11–59; the sequence is RDAINWLPDEILGKILSLLATKQAVSTSVLSKKWRTLFKLVDTLEFDDS. LRR repeat units lie at residues 239 to 262 and 288 to 312; these read LPNL…NLES and IRNV…KYGL.

The polypeptide is F-box/LRR-repeat protein At1g06630 (Arabidopsis thaliana (Mouse-ear cress)).